The sequence spans 544 residues: MDKYTALIHDENFSTLTLNVSRYPKSLAYWEKLLNYIVKASAPICKSTEPQLLKLIRCTYSSMLNEFPYLENYYIDFALLEYKLGNVSMSHKIFQRGLQAFNQRSLLLWTSYLKFCNNVISHQKQLFKKYETAEEYVGLHFFSGEFWDLYLEQISSRCTSSKKYWNVLRKILEIPLHSFSKFYALWLQRIDDIMDLKQLSQLTSKDELLKKLKIDINYSGRKGPYLQDAKKKLKKITKEMYMVVQYQVLEIYSIFESKIYINYYTSPETLVSSDEIETWIKYLDYTITLQTDSLTHLNFQRALLPLAHYDLVWIKYSKWLINSKNDLLGAKNVLLMGLKFSLKKTEIIKLLYSVICKLNEYVLLRNLLEKIESSYSDNVENVDDFEIFWDYLQFKTFCQNSLYSSRYSDSQSNGLLNKELFDKVWKRLSCKEKKSGQEILLNNLVQFYSKDTVEFVEKNIFQKIIEFGWEYYLQNGMFWNCYCRLIYFDTSRSYLDKRQYIVRKIWPQIDKKFAQSVLPSLTEFCESYFPEEMDTLEEMFTEEP.

5 HAT repeats span residues 7-39 (LIHD…YIVK), 51-83 (QLLK…LEYK), 85-118 (GNVS…FCNN), 121-156 (SHQK…QISS), and 163-195 (KYWN…DIMD). The Nuclear localization signal motif lies at 230–235 (KKKLKK). HAT repeat units follow at residues 255 to 288 (FESK…YTIT), 290 to 322 (QTDS…WLIN), 366 to 397 (NLLE…FKTF), and 456 to 488 (VEKN…LIYF).

In terms of assembly, component of the 18S U1 snRNP particle, a subcomplex of the spliceosome.

Its subcellular location is the nucleus. Its function is as follows. Essential component of the U1 snRNP particle, which recognizes and binds the 5'-splice site of pre-mRNA. Together with other non-snRNP factors, U1 snRNP forms the spliceosomal commitment complex, that targets pre-mRNA to the splicing pathway. U1 snRNP is cotranscriptionally recruited to intron-containing genes. Required for U1 snRNP biogenesis. The sequence is that of U1 small nuclear ribonucleoprotein component PRP42 (PRP42) from Saccharomyces cerevisiae (strain ATCC 204508 / S288c) (Baker's yeast).